Here is a 45-residue protein sequence, read N- to C-terminus: Large ribosomal subunit protein bL34 (45 aa).

Belongs to the bacterial ribosomal protein bL34 family.

In Beutenbergia cavernae (strain ATCC BAA-8 / DSM 12333 / CCUG 43141 / JCM 11478 / NBRC 16432 / NCIMB 13614 / HKI 0122), this protein is Large ribosomal subunit protein bL34.